The sequence spans 93 residues: Small ribosomal subunit protein uS19 (93 aa).

This sequence belongs to the universal ribosomal protein uS19 family.

Its function is as follows. Protein S19 forms a complex with S13 that binds strongly to the 16S ribosomal RNA. The sequence is that of Small ribosomal subunit protein uS19 from Limosilactobacillus fermentum (strain NBRC 3956 / LMG 18251) (Lactobacillus fermentum).